The primary structure comprises 369 residues: Trichocyst matrix protein T1-B (369 aa).

The signal sequence occupies residues 1 to 16 (MYKLAVCTLLILSVTA). Residues 17–55 (IDVTNSVWTSHDQKAFAQIKQSGWGNFILNFGELHLQTG) constitute a propeptide that is removed on maturation. Residues 56–180 (GILAELNTEI…AIDESLQLLS (125 aa)) adopt a coiled-coil conformation. Positions 190 to 225 (IQKVQKNLTKIQQSLKRHSTFQTFIKTLLEIAVEAN) are excised as a propeptide. Residues 262–354 (KDFEARVIQL…AHQALDLLNQ (93 aa)) are a coiled coil.

The protein belongs to the TMP family. In terms of processing, two components are produced by post-translational processing from the precursor peptide.

It localises to the trichocyst. Its function is as follows. Structural protein that crystallize inside the trichocyst matrix. In Paramecium tetraurelia, this protein is Trichocyst matrix protein T1-B (T1B).